The chain runs to 185 residues: Elongation factor P (185 aa).

The protein belongs to the elongation factor P family.

It localises to the cytoplasm. The protein operates within protein biosynthesis; polypeptide chain elongation. Functionally, involved in peptide bond synthesis. Stimulates efficient translation and peptide-bond synthesis on native or reconstituted 70S ribosomes in vitro. Probably functions indirectly by altering the affinity of the ribosome for aminoacyl-tRNA, thus increasing their reactivity as acceptors for peptidyl transferase. In Clostridium kluyveri (strain ATCC 8527 / DSM 555 / NBRC 12016 / NCIMB 10680 / K1), this protein is Elongation factor P.